The following is a 426-amino-acid chain: Oligouridylate-binding protein 1A (426 aa).

The tract at residues 1–26 (MQNQRLIKQQQQQQQQQHQQAMIQQA) is disordered. Positions 9–26 (QQQQQQQQQHQQAMIQQA) are enriched in low complexity. RRM domains follow at residues 63–137 (RSVY…WAYA) and 148–226 (FNIF…WATK). The interval 230 to 268 (FGEDKHSSDGKSVVELTNGSSEDGRELSNEDAPENNPQF) is disordered. At S250 the chain carries Phosphoserine. In terms of domain architecture, RRM 3 spans 269-344 (TTVYVGNLSP…RQIRCSWGNK (76 aa)).

In terms of assembly, interacts with UBA1A and UBA2A.

It localises to the nucleus. Functionally, heterogeneous nuclear ribonucleoprotein (hnRNP)-like protein that acts as a component of the pre-mRNA processing machinery. Functions to facilitate the nuclear maturation of plant pre-mRNAs. The chain is Oligouridylate-binding protein 1A (UBP1A) from Arabidopsis thaliana (Mouse-ear cress).